Here is a 704-residue protein sequence, read N- to C-terminus: Histone-lysine N-methyltransferase, H3 lysine-9 specific SUVH1 (704 aa).

Disordered regions lie at residues 1 to 21 (MEQGLRSDGNNPPSIDKTRVL) and 68 to 176 (PFVA…QAEG). Polar residues-rich tracts occupy residues 80–90 (ESSQQTPSGVP) and 109–121 (SFRTPTTANGNSG). The span at 159–170 (GKKRGRPKKPRR) shows a compositional bias: basic residues. The 148-residue stretch at 265–412 (GNAPGIEVGD…CNVFKYKLLR (148 aa)) folds into the YDG domain. The Pre-SET domain maps to 487–548 (PSCHCVGGCQ…NCRNRMSQGG (62 aa)). Zn(2+) contacts are provided by Cys-489, Cys-491, Cys-495, Cys-502, Cys-504, Cys-530, Cys-534, Cys-536, and Cys-540. The 131-residue stretch at 551-681 (ARLEVFKTKN…PMQELTFDYG (131 aa)) folds into the SET domain. Residues 561 to 563 (RGW), Asp-593, Tyr-595, Arg-635, and 638 to 639 (NH) contribute to the S-adenosyl-L-methionine site. 4 residues coordinate Zn(2+): Cys-641, Cys-692, Cys-694, and Cys-699. One can recognise a Post-SET domain in the interval 688–704 (RRKKCLCGSLNCRGYFY).

It belongs to the class V-like SAM-binding methyltransferase superfamily. Histone-lysine methyltransferase family. Suvar3-9 subfamily. As to quaternary structure, interacts with LHP1. As to expression, expressed in roots, stems, leaves and flowers.

The protein resides in the nucleus. Its subcellular location is the chromosome. It carries out the reaction N(6)-methyl-L-lysyl(27)-[histone H3] + S-adenosyl-L-methionine = N(6),N(6)-dimethyl-L-lysyl(27)-[histone H3] + S-adenosyl-L-homocysteine + H(+). It catalyses the reaction L-lysyl(9)-[histone H3] + 2 S-adenosyl-L-methionine = N(6),N(6)-dimethyl-L-lysyl(9)-[histone H3] + 2 S-adenosyl-L-homocysteine + 2 H(+). The enzyme catalyses L-lysyl(27)-[histone H3] + S-adenosyl-L-methionine = N(6)-methyl-L-lysyl(27)-[histone H3] + S-adenosyl-L-homocysteine + H(+). Its function is as follows. Histone methyltransferase. Methylates in vitro both 'Lys-9' and 'Lys-27' of histone H3. Required for in vivo dimethylation of 'Lys-9'. H3 'Lys-9' methylation represents a specific tag for epigenetic control for plant development and transcriptional repression. The polypeptide is Histone-lysine N-methyltransferase, H3 lysine-9 specific SUVH1 (SUVH1) (Nicotiana tabacum (Common tobacco)).